The primary structure comprises 1407 residues: JmjC domain-containing histone demethylation protein 1 (1407 aa).

Disordered regions lie at residues 1–86 (MISA…SSTI) and 98–151 (PTFT…NAFS). Composition is skewed to basic and acidic residues over residues 55–67 (DHVRSTPTDKRPS) and 125–140 (PVERPAKRPRSERDES). Residues 141–150 (SYTQHRSNAF) are compositionally biased toward polar residues. Residues 323 to 382 (QASCATCNLVRIPVDNEDQDVTWISCDGCKRWFHIVCAGFKNDRETRTVDKFICKTCRPI) form a PHD-type zinc finger. The JmjC domain maps to 577-735 (VSQSKLGRLI…MQIKIAKIEK (159 aa)). Residue T628 participates in substrate binding. 2 residues coordinate Fe cation: H631 and D633. Residue K648 participates in substrate binding. Residue H703 participates in Fe cation binding. Disordered regions lie at residues 893 to 987 (KLSL…LGPK), 1004 to 1027 (KEENNGASGSQMTVSTSSLGHHTP), 1122 to 1183 (IKAQ…QDSV), and 1252 to 1389 (DEMD…SLRL). Composition is skewed to basic and acidic residues over residues 896–914 (LAEKRPAGRPSRRSERNAD) and 928–938 (LSERPAVDIQK). Residues 1008 to 1027 (NGASGSQMTVSTSSLGHHTP) show a composition bias toward polar residues. Residues 1254-1264 (MDIHDQVDAGG) show a composition bias toward basic and acidic residues. Positions 1273-1284 (PSSGSRQSSRQP) are enriched in low complexity. Positions 1285–1296 (RQVERYMPEVHF) are enriched in basic and acidic residues. The span at 1297-1349 (AKTAKSTTTTPQTTRRSSFGSSGRKTTPGLSSGSKKSGSRPSSSHGKKSLSPS) shows a compositional bias: low complexity.

Belongs to the JHDM1 histone demethylase family. It depends on Fe(2+) as a cofactor.

It is found in the nucleus. The catalysed reaction is N(6),N(6)-dimethyl-L-lysyl(36)-[histone H3] + 2 2-oxoglutarate + 2 O2 = L-lysyl(36)-[histone H3] + 2 formaldehyde + 2 succinate + 2 CO2. Histone demethylase that specifically demethylates 'Lys-36' of histone H3, thereby playing a central role in histone code. This Emericella nidulans (strain FGSC A4 / ATCC 38163 / CBS 112.46 / NRRL 194 / M139) (Aspergillus nidulans) protein is JmjC domain-containing histone demethylation protein 1 (jhd1).